Consider the following 185-residue polypeptide: Protein N-terminal glutamine amidohydrolase (185 aa).

Residues Cys14, His62, and Asp78 contribute to the active site.

This sequence belongs to the NTAQ1 family. As to quaternary structure, monomer.

It catalyses the reaction N-terminal L-glutaminyl-[protein] + H2O = N-terminal L-glutamyl-[protein] + NH4(+). In terms of biological role, mediates the side-chain deamidation of N-terminal glutamine residues to glutamate, an important step in N-end rule pathway of protein degradation. Conversion of the resulting N-terminal glutamine to glutamate renders the protein susceptible to arginylation, polyubiquitination and degradation as specified by the N-end rule. Does not act on substrates with internal or C-terminal glutamine and does not act on non-glutamine residues in any position. This Caenorhabditis briggsae protein is Protein N-terminal glutamine amidohydrolase.